A 405-amino-acid chain; its full sequence is Alpha-1-antiproteinase S (405 aa).

A signal peptide spans 1 to 24 (MPSAIPRGLLLLAGLCCLVFGIMA). Residues Asn-57, Asn-94, Asn-157, and Asn-258 are each glycosylated (N-linked (GlcNAc...) asparagine). The segment at 360-379 (GATMMEFMPMSLPEDLSFNK) is RCL.

It belongs to the serpin family.

Its subcellular location is the secreted. Its function is as follows. Inhibits elastase, chymotrypsin, cathepsin G, plasmin, and trypsin. The protein is Alpha-1-antiproteinase S of Cavia porcellus (Guinea pig).